We begin with the raw amino-acid sequence, 444 residues long: DNA primase DnaG (444 aa).

The Toprim domain occupies 173–250 (DAILIVEGRS…YVTRAPRGLE (78 aa)). The Mg(2+) site is built by Glu-179, Asp-221, and Asp-223. The tract at residues 302–354 (VTSSVNKTDKYSQKNESKQFKQQKNENKQVKDNSKEKTQKSTEKHNETEETHL) is disordered. The segment covering 308 to 354 (KTDKYSQKNESKQFKQQKNENKQVKDNSKEKTQKSTEKHNETEETHL) has biased composition (basic and acidic residues).

Belongs to the archaeal DnaG primase family. In terms of assembly, forms a ternary complex with MCM helicase and DNA. Component of the archaeal exosome complex. Mg(2+) serves as cofactor.

The catalysed reaction is ssDNA + n NTP = ssDNA/pppN(pN)n-1 hybrid + (n-1) diphosphate.. In terms of biological role, RNA polymerase that catalyzes the synthesis of short RNA molecules used as primers for DNA polymerase during DNA replication. Also part of the exosome, which is a complex involved in RNA degradation. Acts as a poly(A)-binding protein that enhances the interaction between heteromeric, adenine-rich transcripts and the exosome. In Methanosphaera stadtmanae (strain ATCC 43021 / DSM 3091 / JCM 11832 / MCB-3), this protein is DNA primase DnaG.